The primary structure comprises 81 residues: Small ribosomal subunit protein bS18 (81 aa).

It belongs to the bacterial ribosomal protein bS18 family. Part of the 30S ribosomal subunit. Forms a tight heterodimer with protein bS6.

Binds as a heterodimer with protein bS6 to the central domain of the 16S rRNA, where it helps stabilize the platform of the 30S subunit. This is Small ribosomal subunit protein bS18 from Lactococcus lactis subsp. cremoris (strain MG1363).